A 197-amino-acid chain; its full sequence is Small ribosomal subunit protein uS7 (197 aa).

It belongs to the universal ribosomal protein uS7 family.

The sequence is that of Small ribosomal subunit protein uS7 (RPS5) from Cicer arietinum (Chickpea).